A 539-amino-acid polypeptide reads, in one-letter code: D-mannonate oxidoreductase (539 aa).

39–50 (WVHFGGGNIFRG) provides a ligand contact to NAD(+).

Belongs to the mannitol dehydrogenase family. UxuB subfamily.

It carries out the reaction D-mannonate + NAD(+) = keto-D-fructuronate + NADH + H(+). Its pathway is carbohydrate metabolism. Catalyzes the reduction of D-fructuronate (D-FruA) to D-mannonate (D-ManA). This chain is D-mannonate oxidoreductase, found in Thermotoga maritima (strain ATCC 43589 / DSM 3109 / JCM 10099 / NBRC 100826 / MSB8).